We begin with the raw amino-acid sequence, 172 residues long: uncharacterized protein (172 aa).

The span at 147–159 (AGSGSGSGSGSGS) shows a compositional bias: gly residues. A disordered region spans residues 147-172 (AGSGSGSGSGSGSDTGPFKKSQYKIL).

This is an uncharacterized protein from Homo sapiens (Human).